The sequence spans 297 residues: Ubiquinol oxidase 2, mitochondrial (297 aa).

A disordered region spans residues 17–43 (VALNDKQHDKKVENGGAAASGGGDGGD). A helical membrane pass occupies residues 122–142 (AMMLETVAAVPGMVGGMLLHC). 3 residues coordinate Fe cation: glutamate 126, glutamate 165, and histidine 168. Residues 184-204 (ALVFAVQGVFINAYFVTYLLS) form a helical membrane-spanning segment. Positions 216, 267, and 270 each coordinate Fe cation.

It belongs to the alternative oxidase family. Homodimer; disulfide-linked. The cofactor is Fe cation.

The protein localises to the mitochondrion inner membrane. The catalysed reaction is 2 a ubiquinol + O2 = 2 a ubiquinone + 2 H2O. Functionally, catalyzes the cyanide-resistant oxidation of ubiquinol and the reduction of molecular oxygen to water, but does not translocate protons and consequently is not linked to oxidative phosphorylation. May increase respiration when the cytochrome respiratory pathway is restricted, or in response to low temperatures. This Nicotiana tabacum (Common tobacco) protein is Ubiquinol oxidase 2, mitochondrial (AOX2).